Consider the following 2471-residue polypeptide: MSMNFFNSSEPARDHKPDQEKETVMTTEHYEFERPDVKAIRNFKFFRSDETETKKGPNLHISDLSPLESQSVPPSALSLNHSIIPDQYERRQDTPDPIHTPEISLSDYLYDQTLSPQGFDNSRENFNIHKTIASLFEDNSSVVSQESTDDTKTTLSSETCDSFSLNNASYLTNINFVQNHLQYLSQNVLGNRTSNSLPPSSSSQIDFDASNLTPDSIPGYILNKKLGSVHQSTDSVYNAIKIPQNEEYNCCTKASASQNPTNLNSKVIVRLSPNIFQNLSLSRFLNEWYILSGKHSSKEHQIWSNESLTNEYVQDKTIPTFDKESARFRPTLPINIPGILYPQEIINFCVNSHDYPLEHPSQSTDQKRFAMVYQDNDYKTFKELSMFTLHELQTRQGSYSSNESRRKSSSGFNIGVNATTTEAGSLESFSNLMQNHHLGATSTNGDPFHSKLAKFEYGVSKSPMKLIEILTDIMRVVETISVIHELGFVHNGLTSSNLLKSEKNVRDIKITGWGFAFSFTENCSQGYRNKHLAQVQDLIPYMAPEVLAITNSVVDYRSDFYSLGVIMYELVLGILPFKNSNPQKLIRMHTFENPIAPSALAPGWISEKLSGVIMKLLEKHPHNRYTDCHSLLHDLIEVKNMYISKLLDSGETIPNSNLNLSDRQYYLTKENLLHPEKMGITPVLGLKESFIGRRDFLQNVTEVYNNSKNGIDLLFISGESGRGKTIILQDLRAAAVLKQDFYYSWKFSFFGADTHVYRFLVEGVQKIITQILNSSEEIQNTWRDVILTHIPIDLSILFYLIPELKVLLGKKYTSIYKHKIGMGMLKRSFKEDQTSRLEIKLRQILKEFFKLVAKQGLSIFLDDVQWCSEESWRLLCDVLDFDSSGEVRESYNIKIVVCYALNADHLENVNIEHKKISFCRYAKQSHLNLREFSIPHIPLEDAIEFLCEPYTRSHDHECNSKKSDVIANLNCTNEYPQNTCKVIPSIIQELYQSSEGNVLLLIFLTRMTKLSGKVPFQRFSVKNSYLYDHLSNSNYGTTRKEILTNYLNMGTNSDTRALLKVAALISNGSGFFFSDLIVATDLPMAEAFQLLQICIHSRIIVPTSTYYKIPMDLIASDQTPFDLTDDNIWKLATLCSYKFYHDSICTHIIKELNASGEFKELSRLCGLRFYNTITKERLLNIGGYLQMATHFRNSYEVAGPEENEKYVEVLVQAGRYAISTYNMKLSQWFFNVVGELVYNLDSKTQLKSVLTIAENHFNSREFEQCLSVVENAQRKFGFDRLIFSIQIVRCKIELGDYDEAHRIAIECLKELGVPLDDDDEYTSENSLETCLGKIPLSVADIRGILKIKRCKNSRTLLMYQLISELIVLFKLQGKDKVRRFLTAYAMSQIHTQGSSPYCAVILIDFAQSFVNETTTSGMLKAKELSIVMLSLINRAPEISLSYVQSIYEYYFSCHAVFFESIEKMSDLIHPGNASSHCTRSSYYSSFHLIVNVSKIFFSCMNGESFKMFSTFKCKSYLTGDPQMPEMDNFLYDSEMLLAGHSELNEFMRKYQSFNQTSVGKFCYYLIVLLVMSREHRFDEAADLVLKVLEDLSEKLPVSFLHHQYYLICGKVFAYHQTKTPESEEQVERILARQFERYELWASTNKPTLLPRYLLLSTYKQIRENHVDKLEILDSFEEALQTAHKFHNVYDMCWINLECARWLISINQKRHRISRMVKQGLKILRSLELNNHLRLAEFEFDEYIEDEDHRNKWAGLTNNPTLDTVTTWQQQNMPDKVSPCNDKQLVHGKQFGKKEFDSHLLRLHFDGQYTGLDLNSAIRECLAISEALDENSILTKLMASAIKYSGATYGVIVTKKNQETPFLRTIGSQHNIHTLNNMPISDDICPAQLIRHVLHTGETVNKAHDHIGFANKFENEYFQTTDKKYSVVCLPLKSSLGLFGALYLEGSDGDFGHEDLFNERKCDLLQLFCTQAAVALGKERLLLQMELAKMAAEDATDEKASFLANMSHEIRTPFNSLLSFAIFLLDTKLDSTQREYVEAIQSSAMITLNIIDGILAFSKIEHGSFTLENAPFSLNDCIETAIQVSGETILNDQIELVFCNNCPEIEFVVGDLTRFRQIVINLVGNAIKFTTKGHVLISCDSRKITDDRFEINVSVEDSGIGISKKSQNKVFGAFSQVDGSARREYGGSGLGLAISKKLTELMGGTIRFESEEGIGTTFYVSVIMDAKEYSSPPFSLNKKCLIYSQHCLTAKSISNMLNYFGSTVKVTNQKSEFSTSVQANDIIFVDRGMEPDVSCKTKVIPIDPKPFKRNKLISILKEQPSLPTKVFGNNKSNLSKQYPLRILLAEDNLLNYKVCLKHLDKLGYKADHAKDGVVVLDKCKELLEKDEKYDVILMDIQMPRKDGITATRDLKTLFHTQKKESWLPVIVALTANVAGDDKKRCLEEGMFDFITKPILPDELRRILTKVGETVNM.

Polar residues predominate over residues M1–E10. Disordered stretches follow at residues M1–Y30, E52–S75, and R395–G415. Over residues P11–Y30 the composition is skewed to basic and acidic residues. A Protein kinase domain is found at E358–I636. The Histidine kinase domain occupies N2004–A2225. H2007 carries the phosphohistidine; by autocatalysis modification. A Response regulatory domain is found at R2340 to G2466. D2394 carries the 4-aspartylphosphate modification.

In terms of processing, the phosphorelay mechanism involves the sequential transfer of a phosphate group from His-2007 (H1) in the histidine kinase domain (transmitter domain) to Asp-2394 (D1) of the response regulatory domain (receiver domain). This transfer probably occurs between two CHK1 molecules, rather than intramolecularly.

It carries out the reaction ATP + protein L-histidine = ADP + protein N-phospho-L-histidine.. Histidine kinase involved in a two-component signaling pathway that regulates cell wall mannan and glucan biosynthesis. Regulates quorum sensing as well as hyphal formation, biofilm formation, chlamidospore formation, and virulence. Plays a prominent role in phagocyte activation. Involved in the covering of the most potent pro-inflammatory cell wall molecules, the beta-glucans, underneath a dense mannan layer, so that the pathogen becomes partly invisible for immune cells such as phagocytes. The sequence is that of Histidine protein kinase 1 (CHK1) from Candida albicans (strain SC5314 / ATCC MYA-2876) (Yeast).